The following is a 23-amino-acid chain: TWEECCKNPGCRNNHVDRCRGQV.

2 disulfide bridges follow: C5–C11 and C6–C19. The segment at 7–9 (KNP) is lacks the Ser-Xaa-Pro motif that is crucial for potent interaction with nAChR.

In terms of tissue distribution, expressed by venom duct.

Its subcellular location is the secreted. In terms of biological role, alpha-conotoxins act on postsynaptic membranes, they bind to the nicotinic acetylcholine receptors (nAChR) and thus inhibit them. Is a specific blocker of the alpha-3-beta-4/CHRNA3-CHRNB4 image nAChR and may also block alpha-3-beta-4-alpha-5 (CHRNA3-CHRNB4-CHRNA5) channels. Has possibly a distinct nAChR binding mode from other alpha-conotoxins, due to a different three residue motif (lacks the Ser-Xaa-Pro motif). In vivo, causes hyperactivity and behavioral disorders in mice following intracranial injection. In Conus regius (Crown cone), this protein is Alpha-conotoxin-like RgIB.